The following is an 86-amino-acid chain: Small ribosomal subunit protein uS15 (86 aa).

Residues 1-10 (MSIDTQSIIE) are compositionally biased toward polar residues. Positions 1–21 (MSIDTQSIIENNKRSAHDTGS) are disordered.

Belongs to the universal ribosomal protein uS15 family. In terms of assembly, part of the 30S ribosomal subunit. Forms a bridge to the 50S subunit in the 70S ribosome, contacting the 23S rRNA.

In terms of biological role, one of the primary rRNA binding proteins, it binds directly to 16S rRNA where it helps nucleate assembly of the platform of the 30S subunit by binding and bridging several RNA helices of the 16S rRNA. Functionally, forms an intersubunit bridge (bridge B4) with the 23S rRNA of the 50S subunit in the ribosome. This is Small ribosomal subunit protein uS15 from Xylella fastidiosa (strain M23).